Here is a 203-residue protein sequence, read N- to C-terminus: A-type ATP synthase subunit E (203 aa).

It belongs to the V-ATPase E subunit family. As to quaternary structure, has multiple subunits with at least A(3), B(3), C, D, E, F, H, I and proteolipid K(x).

The protein localises to the cell membrane. Its function is as follows. Component of the A-type ATP synthase that produces ATP from ADP in the presence of a proton gradient across the membrane. The polypeptide is A-type ATP synthase subunit E (Methanococcus vannielii (strain ATCC 35089 / DSM 1224 / JCM 13029 / OCM 148 / SB)).